The sequence spans 64 residues: SPbeta prophage-derived uncharacterized protein YonP (64 aa).

This is SPbeta prophage-derived uncharacterized protein YonP (yonP) from Bacillus subtilis (strain 168).